A 968-amino-acid chain; its full sequence is Angiomotin-like protein 1 (968 aa).

Polar residues-rich tracts occupy residues 152-164 (VYQS…QGQE) and 177-187 (RSTQPQQNNEE). Positions 152-258 (VYQSARQEPQ…NRANSGQAHK (107 aa)) are disordered. Residues 203–224 (GQQQQQQQQQQQQQQQQQQGQG) show a composition bias toward low complexity. Residues Ser-253, Ser-281, and Ser-307 each carry the phosphoserine modification. Residues 271-291 (RSLSERIMQLSLERNGAKQHL) adopt a coiled-coil conformation. Positions 285–343 (NGAKQHLPSSGNGKSFKAGGEPSPAQPVCKALDPRGPPPEYPFKTKPMKSPVSKNQDHG) are disordered. Coiled coils occupy residues 449 to 645 (VERA…RRLR) and 676 to 705 (ALME…YLEE). The interval 721-742 (AERDTTISNHSRNGSYGESSLE) is disordered. Over residues 726–738 (TISNHSRNGSYGE) the composition is skewed to polar residues. Position 731 is a phosphoserine (Ser-731). The stretch at 748-773 (EEEEVVQANRRCQDMEYTIKNLHAKI) forms a coiled coil. The disordered stretch occupies residues 785-834 (QRSRKDAGKTDSASLRPARSVPSIAAATGTHSRQTSLTSSQLTEEKKEEK). Residues Ser-804, Ser-816, and Ser-840 each carry the phosphoserine modification. The span at 853-878 (ASAPLLPTTPASALSLPASTTSASST) shows a compositional bias: low complexity. The interval 853–956 (ASAPLLPTTP…GRVSNLLHKP (104 aa)) is disordered. Phosphoserine occurs at positions 912 and 918. A PDZ-binding motif is present at residues 965-968 (EVLI).

It belongs to the angiomotin family. Polyubiquitinated by NEDD4, leading to proteasomal degradation. As to expression, expressed in exocrine glands, including pancreas, submandibular gland, lacrimal gland, parotid gland and sublingual gland (at protein level).

It is found in the cell junction. Its subcellular location is the tight junction. Inhibits the Wnt/beta-catenin signaling pathway, probably by recruiting CTNNB1 to recycling endosomes and hence preventing its translocation to the nucleus. The polypeptide is Angiomotin-like protein 1 (Amotl1) (Mus musculus (Mouse)).